Here is a 325-residue protein sequence, read N- to C-terminus: Oligopeptide transport system permease protein OppB (325 aa).

Transmembrane regions (helical) follow at residues 12–32 (YLVLLALASFLTYCLTSLAFS), 102–122 (LVVGSVFGTVAGVVIGAWGAI), 135–155 (LALLVLSTPTFVVANLLILGA), 189–208 (LQHLILPSLTLALAAAAGFS), 248–268 (IPMATLFAYGVAGLVTGAVFV), and 290–310 (TNIVAAITVFSGAVVLLAGLL). An ABC transmembrane type-1 domain is found at 95–311 (IGVSLRLLVV…AVVLLAGLLS (217 aa)).

The protein belongs to the binding-protein-dependent transport system permease family. OppBC subfamily. As to quaternary structure, the complex is composed of an ATP-binding protein (OppD), two transmembrane proteins (OppB and OppC) and a solute-binding protein (OppA).

It is found in the cell inner membrane. In terms of biological role, part of the ABC transporter complex OppABCD involved in the uptake of oligopeptides. Responsible for the translocation of the substrate across the membrane. The polypeptide is Oligopeptide transport system permease protein OppB (Mycobacterium bovis (strain ATCC BAA-935 / AF2122/97)).